The chain runs to 98 residues: Small ribosomal subunit protein bS20 (98 aa).

Belongs to the bacterial ribosomal protein bS20 family.

Its function is as follows. Binds directly to 16S ribosomal RNA. The sequence is that of Small ribosomal subunit protein bS20 from Kosmotoga olearia (strain ATCC BAA-1733 / DSM 21960 / TBF 19.5.1).